The chain runs to 428 residues: Sarcosine reductase complex component B subunit alpha (428 aa).

At C242 the chain carries Pyruvic acid (Cys).

Heterotetramer of two alpha and two beta subunits. Component of the sarcosine reductase complex, together with components A and C. PB is substrate specific. The peptide chain is cleaved into beta and alpha chains, and the alpha chain N-terminal cysteine is deaminated and oxidized to form a reactive pyruvoyl group.

The catalysed reaction is acetyl phosphate + methylamine + [thioredoxin]-disulfide + H2O = sarcosine + [thioredoxin]-dithiol + phosphate + H(+). Its function is as follows. In the first step of sarcosine reductase, the substrate is bound to component PB via a Schiff base intermediate. Then the PB-activated substrate is nucleophilically attacked by the selenol anion of component PA to transform it to a carboxymethylated selenoether and the respective amine. By action of component PC, acetyl phosphate is formed, leaving component PA in its oxidized state. Finally component PA becomes reduced by the thioredoxin system to start a new catalytic cycle of reductive deamination. The protein is Sarcosine reductase complex component B subunit alpha (grdG) of Peptoclostridium acidaminophilum (Eubacterium acidaminophilum).